We begin with the raw amino-acid sequence, 282 residues long: MEMO1 family protein Msm_1438 (282 aa).

The protein belongs to the MEMO1 family.

This is MEMO1 family protein Msm_1438 from Methanobrevibacter smithii (strain ATCC 35061 / DSM 861 / OCM 144 / PS).